The chain runs to 267 residues: 3-methyl-2-oxobutanoate hydroxymethyltransferase (267 aa).

Positions 45 and 84 each coordinate Mg(2+). 3-methyl-2-oxobutanoate contacts are provided by residues 45 to 46 (DS), D84, and K113. E115 provides a ligand contact to Mg(2+). E182 serves as the catalytic Proton acceptor.

It belongs to the PanB family. In terms of assembly, homodecamer; pentamer of dimers. Mg(2+) is required as a cofactor.

It is found in the cytoplasm. The catalysed reaction is 3-methyl-2-oxobutanoate + (6R)-5,10-methylene-5,6,7,8-tetrahydrofolate + H2O = 2-dehydropantoate + (6S)-5,6,7,8-tetrahydrofolate. Its pathway is cofactor biosynthesis; coenzyme A biosynthesis. Functionally, catalyzes the reversible reaction in which hydroxymethyl group from 5,10-methylenetetrahydrofolate is transferred onto alpha-ketoisovalerate to form ketopantoate. The protein is 3-methyl-2-oxobutanoate hydroxymethyltransferase of Saccharolobus islandicus (strain M.16.27) (Sulfolobus islandicus).